The following is a 640-amino-acid chain: MEGPAFSKPLKDKINPWGPLIILGILIRAGVSVQHDSPHQVFNVTWRVTNLMTGQTANATSLLGTMTDAFPKLYFDLCDLVGDDWDETGLGCRTPGGRKRARTFDFYVCPGHTVPTGCGGPREGYCGKWGCETTGQAYWKPSSSWDLISLKRGNTPRNQGPCYDSSAVSSDIKGATPGGRCNPLVLEFTDAGKKASWDGPKVWGLRLYRSTGTDPVTRFSLTRQVLNIGPRVPIGPNPVITDQLPPSRPVQIMLPRPPQPPPPGAASIVPETAPPSQQLGTGDRLLNLVNGAYQALNLTSPDKTQECWLCLVAGPPYYEGVAVLGTYSNHTSAPANCSVASQHKLTLSGVAGRGLCIAAFPKTHQALCNTTQKTSDGSYHLAAPAGTIWACNTGLTPCLSTTVLDLTTDYCVLVELWPKVTYHSPSYVYGQFEKKKTKYKREPVSLTLALLLGGLTMGGIAAGVGTGTTALVATQQFQQLQAAMHDDLKEVEKSITNLEKSLTSLSEVVLQNRRGLDLLFLKEGGLCAALKEECCFYADHTGLVRDSMAKLRERLSQRQKLFESQQGWFEGLFNKSPWFTTLISTIMGPLIILLLILLFGPWILNRLVQFIKDRISVVQALVLTQQYHQLKTIGDCKSRE.

The signal sequence occupies residues 1 to 32; sequence MEGPAFSKPLKDKINPWGPLIILGILIRAGVS. The Extracellular portion of the chain corresponds to 33–582; that stretch reads VQHDSPHQVF…FNKSPWFTTL (550 aa). N-linked (GlcNAc...) asparagine; by host glycosylation is found at Asn43 and Asn58. 2 disulfides stabilise this stretch: Cys109-Cys126 and Cys118-Cys131. N-linked (GlcNAc...) asparagine; by host glycosylation occurs at Asn297. Disulfide bonds link Cys307/Cys310, Cys307/Cys535, Cys337/Cys391, Cys356/Cys368, Cys398/Cys411, and Cys527/Cys534. The short motif at 307-310 is the CXXC element; the sequence is CWLC. Asn329 and Asn336 each carry an N-linked (GlcNAc...) asparagine; by host glycan. N-linked (GlcNAc...) asparagine; by host glycosylation occurs at Asn369. The tract at residues 444 to 464 is fusion peptide; the sequence is VSLTLALLLGGLTMGGIAAGV. A coiled-coil region spans residues 473 to 509; that stretch reads ATQQFQQLQAAMHDDLKEVEKSITNLEKSLTSLSEVV. Positions 510–526 are immunosuppression; it reads LQNRRGLDLLFLKEGGL. The CX6CC motif lies at 527 to 535; sequence CAALKEECC. The chain crosses the membrane as a helical span at residues 583–603; sequence ISTIMGPLIILLLILLFGPWI. Topologically, residues 604–640 are cytoplasmic; the sequence is LNRLVQFIKDRISVVQALVLTQQYHQLKTIGDCKSRE. The YXXL motif; contains endocytosis signal signature appears at 627-630; sequence YHQL.

The mature envelope protein (Env) consists of a trimer of SU-TM heterodimers attached by a labile interchain disulfide bond. Post-translationally, specific enzymatic cleavages in vivo yield mature proteins. Envelope glycoproteins are synthesized as an inactive precursor that is N-glycosylated and processed likely by host cell furin or by a furin-like protease in the Golgi to yield the mature SU and TM proteins. The cleavage site between SU and TM requires the minimal sequence [KR]-X-[KR]-R. The R-peptide is released from the C-terminus of the cytoplasmic tail of the TM protein upon particle formation as a result of proteolytic cleavage by the viral protease. Cleavage of this peptide is required for TM to become fusogenic. In terms of processing, the CXXC motif is highly conserved across a broad range of retroviral envelope proteins. It is thought to participate in the formation of a labile disulfide bond possibly with the CX6CC motif present in the transmembrane protein. Isomerization of the intersubunit disulfide bond to an SU intrachain disulfide bond is thought to occur upon receptor recognition in order to allow membrane fusion. The R-peptide is palmitoylated.

The protein localises to the virion membrane. It is found in the host cell membrane. Its function is as follows. The surface protein (SU) attaches the virus to the host cell by binding to its receptor. This interaction triggers the refolding of the transmembrane protein (TM) and is thought to activate its fusogenic potential by unmasking its fusion peptide. Fusion occurs at the host cell plasma membrane. Functionally, the transmembrane protein (TM) acts as a class I viral fusion protein. Under the current model, the protein has at least 3 conformational states: pre-fusion native state, pre-hairpin intermediate state, and post-fusion hairpin state. During viral and target cell membrane fusion, the coiled coil regions (heptad repeats) assume a trimer-of-hairpins structure, positioning the fusion peptide in close proximity to the C-terminal region of the ectodomain. The formation of this structure appears to drive apposition and subsequent fusion of viral and target cell membranes. Membranes fusion leads to delivery of the nucleocapsid into the cytoplasm. This Mus musculus (Mouse) protein is Envelope glycoprotein (env).